The chain runs to 353 residues: N-acetyl-gamma-glutamyl-phosphate reductase (353 aa).

Cys-157 is a catalytic residue.

The protein belongs to the NAGSA dehydrogenase family. Type 1 subfamily.

It localises to the cytoplasm. It catalyses the reaction N-acetyl-L-glutamate 5-semialdehyde + phosphate + NADP(+) = N-acetyl-L-glutamyl 5-phosphate + NADPH + H(+). The protein operates within amino-acid biosynthesis; L-arginine biosynthesis; N(2)-acetyl-L-ornithine from L-glutamate: step 3/4. Functionally, catalyzes the NADPH-dependent reduction of N-acetyl-5-glutamyl phosphate to yield N-acetyl-L-glutamate 5-semialdehyde. The chain is N-acetyl-gamma-glutamyl-phosphate reductase from Bordetella avium (strain 197N).